A 127-amino-acid polypeptide reads, in one-letter code: Ribosome-binding factor A (127 aa).

The protein belongs to the RbfA family. Monomer. Binds 30S ribosomal subunits, but not 50S ribosomal subunits or 70S ribosomes.

It localises to the cytoplasm. In terms of biological role, one of several proteins that assist in the late maturation steps of the functional core of the 30S ribosomal subunit. Associates with free 30S ribosomal subunits (but not with 30S subunits that are part of 70S ribosomes or polysomes). Required for efficient processing of 16S rRNA. May interact with the 5'-terminal helix region of 16S rRNA. In Chloroflexus aggregans (strain MD-66 / DSM 9485), this protein is Ribosome-binding factor A.